Consider the following 144-residue polypeptide: Protein WAP-3 (144 aa).

Positions 1–21 (MRSRSFLVLVAVFLICETLVA) are cleaved as a signal peptide. Positions 28–49 (RGPKGQGQDPVEGQDQDEGQGP) are disordered. Residue G34 is a region of interest, 8 X 6 AA approximate tandem repeats. 8 consecutive repeat copies span residues 34–39 (GQDPVE), 40–45 (GQDQDE), 46–51 (GQGPVK), 58–63 (GQDLVK), 64–69 (GQDPVE), 70–75 (GQDPVK), 76–81 (AQLPDK), and 82–87 (VQDPVK). The interval 64–85 (GQDPVEGQDPVKAQLPDKVQDP) is disordered. A WAP domain is found at 97–144 (LFPKPGVCPKIIFCPLVNPPIKCWRDSHCPGVKKCCPSLCGKGCVTPR). Intrachain disulfides connect C104-C132, C110-C136, C119-C131, and C125-C140.

Large intestine (relatively low levels).

This chain is Protein WAP-3, found in Sus scrofa (Pig).